Reading from the N-terminus, the 230-residue chain is Thymidylate synthase 1 (230 aa).

Residue 92–93 coordinates dUMP; the sequence is RR. Cys112 serves as the catalytic Nucleophile. Residues 132–135, Asn143, and 173–175 each bind dUMP; these read RSND and HVY. Asp135 is a binding site for (6R)-5,10-methylene-5,6,7,8-tetrahydrofolate.

It belongs to the thymidylate synthase family. Bacterial-type ThyA subfamily. Homodimer.

It is found in the cytoplasm. It catalyses the reaction dUMP + (6R)-5,10-methylene-5,6,7,8-tetrahydrofolate = 7,8-dihydrofolate + dTMP. The protein operates within pyrimidine metabolism; dTTP biosynthesis. Its function is as follows. Catalyzes the reductive methylation of 2'-deoxyuridine-5'-monophosphate (dUMP) to 2'-deoxythymidine-5'-monophosphate (dTMP) while utilizing 5,10-methylenetetrahydrofolate (mTHF) as the methyl donor and reductant in the reaction, yielding dihydrofolate (DHF) as a by-product. This enzymatic reaction provides an intracellular de novo source of dTMP, an essential precursor for DNA biosynthesis. The protein is Thymidylate synthase 1 of Bacillus amyloliquefaciens (Bacillus velezensis).